A 222-amino-acid polypeptide reads, in one-letter code: Flagellin B5 (222 aa).

Positions 1–4 (MRRG) are excised as a propeptide.

Belongs to the archaeal flagellin family.

It is found in the archaeal flagellum. In terms of biological role, flagellin is the subunit protein which polymerizes to form the filaments of archaeal flagella. The chain is Flagellin B5 (flaB5) from Pyrococcus abyssi (strain GE5 / Orsay).